A 53-amino-acid chain; its full sequence is MRNKAHNFPNQNNNKLEGEPRAKAEYASKRADGTTNTHPQERMRASGERSDFF.

Positions 1 to 53 (MRNKAHNFPNQNNNKLEGEPRAKAEYASKRADGTTNTHPQERMRASGERSDFF) are disordered. Basic and acidic residues-rich tracts occupy residues 16–32 (LEGEPRAKAEYASKRAD) and 39–53 (PQERMRASGERSDFF).

Belongs to the SspK family.

It is found in the spore core. This Geobacillus kaustophilus (strain HTA426) protein is Small, acid-soluble spore protein K.